The following is a 232-amino-acid chain: Protein TIFY 10c (232 aa).

Positions Pro-54–Leu-73 are disordered. Positions Ala-114–Thr-149 constitute a Tify domain. Residues Gly-152–Pro-177 are disordered. A compositionally biased stretch (polar residues) spans Asn-156–Leu-165. A Jas motif is present at residues Pro-177 to Gln-202. The Nuclear localization signal motif lies at Ala-179–Arg-186.

The protein belongs to the TIFY/JAZ family. Interacts with BHLH148. Interacts with COI1B in a coronatine-dependent manner. Coronatine is an analog of jasmonoyl isoleucine (JA-Ile). Interacts with TIFY5/JAZ2, TIFY6B/JAZ4, TIFY9/JAZ5, TIFY11A, TIFY11D/JAZ12, TIFY11G/JAZ15 and NINJA1. Ubiquitinated. Increase in jasmonoyl isoleucine (JA-Ile) levels mediates its degradation via COI1B-mediated proteasome pathway.

It is found in the nucleus. The protein resides in the cytoplasm. It localises to the cytosol. Functionally, repressor of jasmonate (JA) responses. Acts as a repressor of JA-induced resistance to the bacterial blight pathogen Xanthomonas oryzae pv. oryzae (Xoo). Regulates JA-induced accumulation of linalool at the transcriptional level of linalool synthase gene LIS. Linalool is important for resistance to bacterial blight pathogen Xoo. The protein is Protein TIFY 10c of Oryza sativa subsp. japonica (Rice).